Consider the following 76-residue polypeptide: Esculentin-2-ALa (76 aa).

Positions 1 to 22 (MFTLKKSMLLLFFLGTISLSLC) are cleaved as a signal peptide. A propeptide spanning residues 23-39 (EEERNADEDDGEKEVKR) is cleaved from the precursor. Cysteines 70 and 76 form a disulfide.

As to expression, expressed by the skin glands.

It is found in the secreted. Antimicrobial peptide with activity against Gram-positive and Gram-negative bacteria and against fungi. Has been tested against S.aureus (MIC=2.5 ug/mL), B.pumilus (MIC=2.5 ug/mL), B.cereus (MIC=7.5 ug/mL), E.coli (MIC=12.5 ug/mL), B.dysenteriae (MIC=7.5 ug/mL), A.cacoaceticus (MIC=25.0 ug/mL), P.aeruginosa (MIC=50.0 ug/mL) and C.albicans (MIC=2.5 ug/mL). Also shows a weak hemolytic activity. The sequence is that of Esculentin-2-ALa from Amolops loloensis (Lolokou Sucker Frog).